Consider the following 186-residue polypeptide: Large ribosomal subunit protein uL22 (186 aa).

Basic and acidic residues-rich tracts occupy residues 157 to 167 and 177 to 186; these read VSKATDDEPTK and RQKEKMLRSE. The segment at 157–186 is disordered; it reads VSKATDDEPTKKKLSKKKLQRQKEKMLRSE.

Belongs to the universal ribosomal protein uL22 family.

This is Large ribosomal subunit protein uL22 (RpL17) from Drosophila yakuba (Fruit fly).